The primary structure comprises 350 residues: Small ribosomal subunit biogenesis GTPase RsgA (350 aa).

Over residues 1 to 17 (MSKNKLSKGQQRRVNAN) the composition is skewed to polar residues. The disordered stretch occupies residues 1–33 (MSKNKLSKGQQRRVNANHQRRLKTSKEKPDYDD). Residues 104–273 (TSVLTRPDFY…VIDSPGVREF (170 aa)) form the CP-type G domain. Residues 160–163 (NKID) and 214–222 (GQSGVGKSS) each bind GTP. Positions 297, 302, 304, and 310 each coordinate Zn(2+).

This sequence belongs to the TRAFAC class YlqF/YawG GTPase family. RsgA subfamily. Monomer. Associates with 30S ribosomal subunit, binds 16S rRNA. The cofactor is Zn(2+).

The protein resides in the cytoplasm. One of several proteins that assist in the late maturation steps of the functional core of the 30S ribosomal subunit. Helps release RbfA from mature subunits. May play a role in the assembly of ribosomal proteins into the subunit. Circularly permuted GTPase that catalyzes slow GTP hydrolysis, GTPase activity is stimulated by the 30S ribosomal subunit. This chain is Small ribosomal subunit biogenesis GTPase RsgA, found in Escherichia coli (strain ATCC 8739 / DSM 1576 / NBRC 3972 / NCIMB 8545 / WDCM 00012 / Crooks).